We begin with the raw amino-acid sequence, 592 residues long: Guanylate-binding protein 1 (592 aa).

Residues 1-311 form a GTPase domain (Globular) region; the sequence is MASEIHMTGP…NAISSGDLPC (311 aa). Positions 35-278 constitute a GB1/RHD3-type G domain; the sequence is TQPMVVVAIV…FCSYIFSNSK (244 aa). GTP is bound by residues 45-52, 67-69, and 97-101; these read GLYRTGKS, LGS, and DTEGL. The residue at position 156 (Ser156) is a Phosphoserine; by PIM1. (Microbial infection) Glycyl lysine isopeptide (Lys-Gly) (interchain with G-Cter in ubiquitin) cross-links involve residues Lys207, Lys209, Lys210, Lys382, Lys562, Lys567, Lys573, and Lys587. A Cysteine methyl ester modification is found at Cys589. Residue Cys589 is the site of S-farnesyl cysteine attachment. Phosphothreonine; by PIM1 is present on Thr590. A propeptide spans 590-592 (removed in mature form); it reads TIS.

It belongs to the TRAFAC class dynamin-like GTPase superfamily. GB1/RHD3 GTPase family. GB1 subfamily. As to quaternary structure, homodimer; homodimerization occurs upon GTP-binding and is required for the second hydrolysis step from GDP to GMP. Undergoes conformational changes and oligomerization upon GTP-binding and hydrolysis. Heterodimer with other family members, including GBP2, GBP3, GBP4 and GBP5. Dimerization regulates subcellular location to membranous structures. Interacts with SQSTM1. Interacts (when phosphorylated) with 14-3-3 protein sigma (SFN); leading to GBP1 retention in the cytosol and inactivation. Post-translationally, isoprenylation is required for proper subcellular location. In terms of processing, phosphorylated at Ser-156 by PIM1 in absence of infection, inhibits GBP1: phosphorylation promotes interaction with 14-3-3 protein sigma (SFN), leading to GBP1 retention in the cytosol. Dephosphorylated in response to infection, liberating GBP1. (Microbial infection) Ubiquitinated by S.flexneri IpaH9.8, leading to its degradation by the proteasome, thereby preventing its ability to promote host defense against bacterial infection.

The protein localises to the cytoplasmic vesicle membrane. It localises to the golgi apparatus membrane. It is found in the cell membrane. The protein resides in the cytoplasm. Its subcellular location is the cytosol. The protein localises to the secreted. It catalyses the reaction GTP + H2O = GDP + phosphate + H(+). The catalysed reaction is GDP + H2O = GMP + phosphate + H(+). Interferon (IFN)-inducible GTPase that plays important roles in innate immunity against a diverse range of bacterial, viral and protozoan pathogens. Hydrolyzes GTP to GMP in two consecutive cleavage reactions: GTP is first hydrolyzed to GDP and then to GMP in a processive manner. Following infection, recruited to the pathogen-containing vacuoles or vacuole-escaped bacteria and promotes both inflammasome assembly and autophagy. Acts as a positive regulator of inflammasome assembly by facilitating the detection of inflammasome ligands from pathogens. Involved in the lysis of pathogen-containing vacuoles, releasing pathogens into the cytosol. Following pathogen release in the cytosol, forms a protein coat in a GTPase-dependent manner that encapsulates pathogens and promotes the detection of ligands by pattern recognition receptors. Plays a key role in inflammasome assembly in response to infection by Gram-negative bacteria: following pathogen release in the cytosol, forms a protein coat that encapsulates Gram-negative bacteria and directly binds to lipopolysaccharide (LPS), disrupting the O-antigen barrier and unmasking lipid A that is that detected by the non-canonical inflammasome effector CASP4/CASP11. Also promotes recruitment of proteins that mediate bacterial cytolysis, leading to release double-stranded DNA (dsDNA) that activates the AIM2 inflammasome. Involved in autophagy by regulating bacteriolytic peptide generation via its interaction with ubiquitin-binding protein SQSTM1, which delivers monoubiquitinated proteins to autolysosomes for the generation of bacteriolytic peptides. Confers protection to several pathogens, including the bacterial pathogens L.monocytogenes and M.bovis BCG as well as the protozoan pathogen T.gondii. Exhibits antiviral activity against influenza virus. The sequence is that of Guanylate-binding protein 1 from Homo sapiens (Human).